Here is a 500-residue protein sequence, read N- to C-terminus: tRNA (guanine(37)-N(1))-methyltransferase (500 aa).

S-adenosyl-L-methionine is bound by residues H215, 253–254 (DL), 281–282 (DA), and N312. Residues 463–500 (QIVAKKTPKPAPRPLPAKNKTTPDTNKMETDLTKLEMK) are disordered. Basic and acidic residues predominate over residues 488-500 (NKMETDLTKLEMK).

The protein belongs to the class I-like SAM-binding methyltransferase superfamily. TRM5/TYW2 family. Monomer.

The protein localises to the mitochondrion matrix. It localises to the nucleus. The protein resides in the cytoplasm. It carries out the reaction guanosine(37) in tRNA + S-adenosyl-L-methionine = N(1)-methylguanosine(37) in tRNA + S-adenosyl-L-homocysteine + H(+). Specifically methylates the N1 position of guanosine-37 in various cytoplasmic and mitochondrial tRNAs. Methylation is not dependent on the nature of the nucleoside 5' of the target nucleoside. This is the first step in the biosynthesis of wybutosine (yW), a modified base adjacent to the anticodon of tRNAs and required for accurate decoding. The polypeptide is tRNA (guanine(37)-N(1))-methyltransferase (Anopheles darlingi (Mosquito)).